We begin with the raw amino-acid sequence, 76 residues long: Acyl carrier protein (76 aa).

The Carrier domain maps to 1 to 76 (MSVEEKVKKI…DAIDYVSNKQ (76 aa)). Ser-36 is subject to O-(pantetheine 4'-phosphoryl)serine.

The protein belongs to the acyl carrier protein (ACP) family. Post-translationally, 4'-phosphopantetheine is transferred from CoA to a specific serine of apo-ACP by AcpS. This modification is essential for activity because fatty acids are bound in thioester linkage to the sulfhydryl of the prosthetic group.

It is found in the cytoplasm. It participates in lipid metabolism; fatty acid biosynthesis. Functionally, carrier of the growing fatty acid chain in fatty acid biosynthesis. The protein is Acyl carrier protein of Nitratidesulfovibrio vulgaris (strain ATCC 29579 / DSM 644 / CCUG 34227 / NCIMB 8303 / VKM B-1760 / Hildenborough) (Desulfovibrio vulgaris).